A 231-amino-acid polypeptide reads, in one-letter code: Probable methylthioribulose-1-phosphate dehydratase (231 aa).

Residue Cys82 coordinates substrate. The Zn(2+) site is built by His100 and His102. The active-site Proton donor/acceptor is Glu123. Residue His181 participates in Zn(2+) binding.

This sequence belongs to the aldolase class II family. MtnB subfamily. The cofactor is Zn(2+).

It localises to the cytoplasm. The enzyme catalyses 5-(methylsulfanyl)-D-ribulose 1-phosphate = 5-methylsulfanyl-2,3-dioxopentyl phosphate + H2O. Its pathway is amino-acid biosynthesis; L-methionine biosynthesis via salvage pathway; L-methionine from S-methyl-5-thio-alpha-D-ribose 1-phosphate: step 2/6. Catalyzes the dehydration of methylthioribulose-1-phosphate (MTRu-1-P) into 2,3-diketo-5-methylthiopentyl-1-phosphate (DK-MTP-1-P). The protein is Probable methylthioribulose-1-phosphate dehydratase of Dictyostelium discoideum (Social amoeba).